We begin with the raw amino-acid sequence, 230 residues long: Large ribosomal subunit protein uL1 (230 aa).

Belongs to the universal ribosomal protein uL1 family. In terms of assembly, part of the 50S ribosomal subunit.

Its function is as follows. Binds directly to 23S rRNA. The L1 stalk is quite mobile in the ribosome, and is involved in E site tRNA release. In terms of biological role, protein L1 is also a translational repressor protein, it controls the translation of the L11 operon by binding to its mRNA. The polypeptide is Large ribosomal subunit protein uL1 (Bacillus cereus (strain B4264)).